The primary structure comprises 362 residues: Atypical chemokine receptor 3 (362 aa).

Residues 1–47 are Extracellular-facing; sequence MDVHLFDYVEPGNYSDINWPCNSSDCIVVDTVQCPAMPNKNVLLYTL. 2 N-linked (GlcNAc...) asparagine glycosylation sites follow: asparagine 13 and asparagine 22. The chain crosses the membrane as a helical span at residues 48–68; it reads SFIYIFIFVIGMIANSVVVWV. Residues 69–81 lie on the Cytoplasmic side of the membrane; it reads NIQAKTTGYDTHC. A helical transmembrane segment spans residues 82–102; it reads YILNLAIADLWVVITIPVWVV. Residues 103–118 are Extracellular-facing; sequence SLVQHNQWPMGELTCK. A disulfide bridge links cysteine 117 with cysteine 196. Residues 119-139 traverse the membrane as a helical segment; that stretch reads ITHLIFSINLFGSIFFLACMS. Residues 140–162 lie on the Cytoplasmic side of the membrane; that stretch reads VDRYLSITYFTSTSSYKKKMVRR. The chain crosses the membrane as a helical span at residues 163–183; that stretch reads VVCVLVWLLAFFVSLPDTYYL. Over 184 to 213 the chain is Extracellular; the sequence is KTVTSASNNETYCRSFYPEHSIKEWLIGME. A helical transmembrane segment spans residues 214-234; that stretch reads LVSVILGFAVPFTIIAIFYFL. The Cytoplasmic portion of the chain corresponds to 235 to 252; that stretch reads LARAMSASGDQEKHSSRK. Residues 253-273 traverse the membrane as a helical segment; that stretch reads IIFSYVVVFLVCWLPYHFVVL. Residues 274-296 lie on the Extracellular side of the membrane; that stretch reads LDIFSILHYIPFTCQLENVLFTA. Residues 297-319 traverse the membrane as a helical segment; sequence LHVTQCLSLVHCCVNPVLYSFIN. At 320–362 the chain is on the cytoplasmic side; that stretch reads RNYRYELMKAFIFKYSAKTGLTKLIDASRVSETEYSALEQNTK. Residues 324-362 are C-terminal cytoplasmic tail; it reads YELMKAFIFKYSAKTGLTKLIDASRVSETEYSALEQNTK. Serine 347, serine 350, and serine 355 each carry phosphoserine.

This sequence belongs to the G-protein coupled receptor 1 family. Atypical chemokine receptor subfamily. As to quaternary structure, homodimer. Can form heterodimers with CXCR4; heterodimerization may regulate CXCR4 signaling activity. Interacts with ARRB1 and ARRB2. In terms of processing, the Ser/Thr residues in the C-terminal cytoplasmic tail may be phosphorylated. Ubiquitinated at the Lys residues in its C-terminal cytoplasmic tail and is essential for correct trafficking from and to the cell membrane. Deubiquitinated by CXCL12-stimulation in a reversible manner. Expressed in vascular smooth muscle cells (at protein level). In brain, expressed in blood vessels, pyramidal cells in hippocampal subfield CA3, mature dentate gyrus granule cells, ventricle walls, olfactory bulb, accumbens shell, supraoptic, lateroanterior and ventromedial hypothalamic nuclei, medial region of thalamus, and motor nuclei, central gray and raphe magnus nucleus of brain stem. Detected in primary neurons, GABAergic neurons, astrocytes, cerebral cortex, ventral striatum and choroid plexus. Not detected in mesencephalon.

Its subcellular location is the cell membrane. The protein resides in the early endosome. It localises to the recycling endosome. Atypical chemokine receptor that controls chemokine levels and localization via high-affinity chemokine binding that is uncoupled from classic ligand-driven signal transduction cascades, resulting instead in chemokine sequestration, degradation, or transcytosis. Also known as interceptor (internalizing receptor) or chemokine-scavenging receptor or chemokine decoy receptor. Acts as a receptor for chemokines CXCL11 and CXCL12/SDF1. Chemokine binding does not activate G-protein-mediated signal transduction but instead induces beta-arrestin recruitment, leading to ligand internalization and activation of MAPK signaling pathway. Required for regulation of CXCR4 protein levels in migrating interneurons, thereby adapting their chemokine responsiveness. In glioma cells, transduces signals via MEK/ERK pathway, mediating resistance to apoptosis. Promotes cell growth and survival. Not involved in cell migration, adhesion or proliferation of normal hematopoietic progenitors but activated by CXCL11 in malignant hemapoietic cells, leading to phosphorylation of ERK1/2 (MAPK3/MAPK1) and enhanced cell adhesion and migration. Plays a regulatory role in CXCR4-mediated activation of cell surface integrins by CXCL12. Required for heart valve development. Functionally, atypical chemokine receptor that controls chemokine levels and localization via high-affinity chemokine binding that is uncoupled from classic ligand-driven signal transduction cascades, resulting instead in chemokine sequestration, degradation, or transcytosis. Also known as interceptor (internalizing receptor) or chemokine-scavenging receptor or chemokine decoy receptor. Acts as a receptor for chemokines CXCL11 and CXCL12/SDF1. Chemokine binding does not activate G-protein-mediated signal transduction but instead induces beta-arrestin recruitment, leading to ligand internalization and activation of MAPK signaling pathway. Required for regulation of CXCR4 protein levels in migrating interneurons, thereby adapting their chemokine responsiveness. In glioma cells, transduces signals via MEK/ERK pathway, mediating resistance to apoptosis. Promotes cell growth and survival. Not involved in cell migration, adhesion or proliferation of normal hematopoietic progenitors but activated by CXCL11 in malignant hemapoietic cells, leading to phosphorylation of ERK1/2 (MAPK3/MAPK1) and enhanced cell adhesion and migration. Plays a regulatory role in CXCR4-mediated activation of cell surface integrins by CXCL12. Required for heart valve development. Regulates axon guidance in the oculomotor system through the regulation of CXCL12 levels. This Rattus norvegicus (Rat) protein is Atypical chemokine receptor 3.